A 650-amino-acid polypeptide reads, in one-letter code: MSLLSTIDSPQDVKRLDHEELVTLAAEIRDFLIHAVARTGGHLGPNLGAVELTLAIHRVFDSPFDRVLWDTGHQSYVHKILTGRREQFDRLRQRGGLSGYPSQAESEHDIIENSHASTALSYADGLSRAYELRGENRAVVAVVGDGALTGGMCWEALNNIAASDRQVVIVVNDNGRSYSPTIGGLADHLASLRLAPEYEQVLDVVKQVLGRTPLVGAPLFDALHGIKKGIKDVVTPQGMFEDLGLKYVGPVDGHDVVAMESALRRAKDFGGPVIVHAMTRKGFGYPAAEQDDADNFHAVGVIDPVTGKPKSASKGTTWTSIFSEEIVRIGSERPDVVTMTAAMLQPVGLKSFAKAFPDRVFDVGIAEQHAVTSAAGLAMGGLKPVVCIYATFLNRAFDQVLMDVAMHRQPVTFVLDRAGITGEDGASHNGMWDMSFLQVVPGLAIAAPRDAATLRAELDEAVSNTDGPTVVRYPKGKVAADSPAIDQVGGVDVLYRAPAAARHREVLLVSIGAMAPTCLDVAERVASQGIGITVVDPRWVKPLDPALVDLARDHDLVVTVEDNGRVGGVGACVAQLLRDADVDVPVREFGVAQRFLDHGKRDDVLAEVGLAPQDLARKVIEAVAKRQHALMGDEVGADESNQTPAGGGQA.

Thiamine diphosphate is bound by residues histidine 73 and 114-116 (SHA). Residue aspartate 145 participates in Mg(2+) binding. Thiamine diphosphate is bound by residues 146–147 (GA), asparagine 174, tyrosine 285, and glutamate 367. Asparagine 174 provides a ligand contact to Mg(2+). The disordered stretch occupies residues 631–650 (MGDEVGADESNQTPAGGGQA).

It belongs to the transketolase family. DXPS subfamily. As to quaternary structure, homodimer. Requires Mg(2+) as cofactor. It depends on thiamine diphosphate as a cofactor.

The catalysed reaction is D-glyceraldehyde 3-phosphate + pyruvate + H(+) = 1-deoxy-D-xylulose 5-phosphate + CO2. The protein operates within metabolic intermediate biosynthesis; 1-deoxy-D-xylulose 5-phosphate biosynthesis; 1-deoxy-D-xylulose 5-phosphate from D-glyceraldehyde 3-phosphate and pyruvate: step 1/1. Functionally, catalyzes the acyloin condensation reaction between C atoms 2 and 3 of pyruvate and glyceraldehyde 3-phosphate to yield 1-deoxy-D-xylulose-5-phosphate (DXP). This Parafrankia sp. (strain EAN1pec) protein is 1-deoxy-D-xylulose-5-phosphate synthase.